We begin with the raw amino-acid sequence, 529 residues long: ATP synthase subunit alpha (529 aa).

An ATP-binding site is contributed by 173–180 (GDRQTGKT).

The protein belongs to the ATPase alpha/beta chains family. As to quaternary structure, F-type ATPases have 2 components, CF(1) - the catalytic core - and CF(0) - the membrane proton channel. CF(1) has five subunits: alpha(3), beta(3), gamma(1), delta(1), epsilon(1). CF(0) has three main subunits: a(1), b(2) and c(9-12). The alpha and beta chains form an alternating ring which encloses part of the gamma chain. CF(1) is attached to CF(0) by a central stalk formed by the gamma and epsilon chains, while a peripheral stalk is formed by the delta and b chains.

The protein localises to the cell membrane. It carries out the reaction ATP + H2O + 4 H(+)(in) = ADP + phosphate + 5 H(+)(out). Functionally, produces ATP from ADP in the presence of a proton gradient across the membrane. The alpha chain is a regulatory subunit. This Streptomyces avermitilis (strain ATCC 31267 / DSM 46492 / JCM 5070 / NBRC 14893 / NCIMB 12804 / NRRL 8165 / MA-4680) protein is ATP synthase subunit alpha.